The following is a 612-amino-acid chain: MVTNKKDTDENRDVQGSIVTKTSAIFPVLVGFRVINSLLTRTYFQADEFWQSLEPAHYKAFGYGELTWEWKVGLRSYAFPMLFEIIYRLVKLLAIASKEALSIICSIGAGLMLLCFPQSKLATEVARDLLTIPNEYSETVEYYGVIYAPKLFMALLAATGEYFTIKLIQKVYLKTVSKNDDQLPKLSNITKIALLLTLTNFFNCFFITRTFINSFEMILTSIALYNWDWSGGIEINTRSFTKSLFFAMFACIQRPSNAIIWIVLGFFLTINLLLRRDYTLIGRLYAKILVVFTITMLVNVVIDFYFYNQIIFPVFKFINFNFTSILSEFYGVAPWHFHLLQSLPIMLGYSLPLFIYGLFSNDSTTKNNIRFGALRQIKFVLILNIIFYSYLKHKEFRFIYPLQPLFCLLSALGALKLAGKVQNYRYLKEYVWIIPLMSMIVSIFITTFQESGVIQVMKDLHNEKDIDSVGFVMPCHSTPWQSYLHRNDIRQLWAISCEPPLHLLGKNNASIELQTYMDESDYLYENISGFIKKNFPKFTNSMDMENVNNNASMPQFPHEWPQFLIIFEQLDNEFMSRYLLDSGYVKYNKIFNSYSHWDSRRNGDLIIYYKNN.

A run of 2 helical transmembrane segments spans residues 92-112 (LLAI…AGLM) and 145-165 (VIYA…YFTI). Residue N188 is glycosylated (N-linked (GlcNAc...) asparagine). 3 consecutive transmembrane segments (helical) span residues 192–212 (IALL…RTFI), 254–274 (RPSN…NLLL), and 288–308 (ILVV…YFYN). N321 is a glycosylation site (N-linked (GlcNAc...) asparagine). The chain crosses the membrane as a helical span at residues 339-359 (LLQSLPIMLGYSLPLFIYGLF). N361 is a glycosylation site (N-linked (GlcNAc...) asparagine). A run of 3 helical transmembrane segments spans residues 371 to 391 (FGAL…YSYL), 398 to 418 (FIYP…LKLA), and 429 to 449 (EYVW…TTFQ). N-linked (GlcNAc...) asparagine glycans are attached at residues N508, N526, and N550.

It belongs to the glycosyltransferase 22 family. PIGB subfamily.

The protein localises to the endoplasmic reticulum membrane. The protein operates within glycolipid biosynthesis; glycosylphosphatidylinositol-anchor biosynthesis. Its function is as follows. Mannosyltransferase involved in glycosylphosphatidylinositol-anchor biosynthesis. Transfers the third mannose to Man2-GlcN-acyl-PI during GPI precursor assembly. In Candida glabrata (strain ATCC 2001 / BCRC 20586 / JCM 3761 / NBRC 0622 / NRRL Y-65 / CBS 138) (Yeast), this protein is GPI mannosyltransferase 3 (GPI10).